Reading from the N-terminus, the 312-residue chain is Putative S-adenosyl-L-methionine-dependent methyltransferase Mjls_0078 (312 aa).

S-adenosyl-L-methionine contacts are provided by residues aspartate 134 and 163–164; that span reads DL.

The protein belongs to the UPF0677 family.

Exhibits S-adenosyl-L-methionine-dependent methyltransferase activity. In Mycobacterium sp. (strain JLS), this protein is Putative S-adenosyl-L-methionine-dependent methyltransferase Mjls_0078.